We begin with the raw amino-acid sequence, 150 residues long: Protein-export protein SecB (150 aa).

Belongs to the SecB family. Homotetramer, a dimer of dimers. One homotetramer interacts with 1 SecA dimer.

Its subcellular location is the cytoplasm. In terms of biological role, one of the proteins required for the normal export of preproteins out of the cell cytoplasm. It is a molecular chaperone that binds to a subset of precursor proteins, maintaining them in a translocation-competent state. It also specifically binds to its receptor SecA. This Psychrobacter cryohalolentis (strain ATCC BAA-1226 / DSM 17306 / VKM B-2378 / K5) protein is Protein-export protein SecB.